Reading from the N-terminus, the 201-residue chain is Ribonuclease HII (201 aa).

The 190-residue stretch at 12-201 folds into the RNase H type-2 domain; it reads DLVAGVDEVG…VRELLDASVE (190 aa). A divalent metal cation is bound by residues D18, E19, and D110.

Belongs to the RNase HII family. Requires Mn(2+) as cofactor. It depends on Mg(2+) as a cofactor.

It is found in the cytoplasm. The catalysed reaction is Endonucleolytic cleavage to 5'-phosphomonoester.. Endonuclease that specifically degrades the RNA of RNA-DNA hybrids. The sequence is that of Ribonuclease HII from Pseudomonas paraeruginosa (strain DSM 24068 / PA7) (Pseudomonas aeruginosa (strain PA7)).